A 553-amino-acid chain; its full sequence is Putative transport protein YidE (553 aa).

5 helical membrane-spanning segments follow: residues 4–24 (IALT…IGNV), 28–48 (GIGL…HFVS), 65–85 (FGLI…FFAS), 95–115 (LFAV…HKLF), and 158–178 (MSYA…MWML). RCK C-terminal domains are found at residues 191-276 (QQHE…VIGQ) and 279-361 (DTSL…VLGN). The next 6 membrane-spanning stretches (helical) occupy residues 371–391 (MLPV…PVFV), 393–413 (GFPA…ALIL), 439–459 (IVLF…NTLV), 464–484 (LSWI…VGIL), 493–513 (YLTM…LAFA), and 533–553 (LVMF…WSIG).

The protein belongs to the AAE transporter (TC 2.A.81) family. YidE subfamily.

It is found in the cell membrane. The sequence is that of Putative transport protein YidE from Escherichia coli O7:K1 (strain IAI39 / ExPEC).